The chain runs to 29 residues: uncharacterized protein (29 aa).

Its subcellular location is the plastid. It localises to the chloroplast. This is an uncharacterized protein from Trieres chinensis (Marine centric diatom).